We begin with the raw amino-acid sequence, 1145 residues long: DNA mismatch repair protein msh-3 (1145 aa).

Disordered regions lie at residues M1–T183 and S857–L879. A compositionally biased stretch (polar residues) spans A13–N33. Residues A121–R131 are compositionally biased toward basic and acidic residues. The segment covering G158 to E169 has biased composition (acidic residues). The interval T183–G307 is mispair-binding domain. Residue G882–S889 participates in ATP binding. The disordered stretch occupies residues K1030–K1056. Acidic residues predominate over residues D1036–G1048.

This sequence belongs to the DNA mismatch repair MutS family. MSH3 subfamily. In terms of assembly, heterodimer consisting of msh-2-msh-3 (MutS beta). Forms a ternary complex with MutL alpha (mlh-1-pms-1).

It is found in the nucleus. Its function is as follows. Component of the post-replicative DNA mismatch repair system (MMR). Heterodimerizes with msh-2 to form MutS beta, which binds to DNA mismatches thereby initiating DNA repair. Msh-3 provides substrate-binding and substrate specificity to the complex. When bound, the MutS beta heterodimer bends the DNA helix and shields approximately 20 base pairs. Acts mainly to repair insertion-deletion loops (IDLs) from 2 to 13 nucleotides in size, but can also repair base-base and single insertion-deletion mismatches that occur during replication. After mismatch binding, forms a ternary complex with the MutL alpha heterodimer, which is thought to be responsible for directing the downstream MMR events, including strand discrimination, excision, and resynthesis. ATP binding and hydrolysis play a pivotal role in mismatch repair functions. The protein is DNA mismatch repair protein msh-3 (msh-3) of Neurospora crassa (strain ATCC 24698 / 74-OR23-1A / CBS 708.71 / DSM 1257 / FGSC 987).